The primary structure comprises 422 residues: Histidine--tRNA ligase (422 aa).

This sequence belongs to the class-II aminoacyl-tRNA synthetase family. In terms of assembly, homodimer.

The protein resides in the cytoplasm. The catalysed reaction is tRNA(His) + L-histidine + ATP = L-histidyl-tRNA(His) + AMP + diphosphate + H(+). The protein is Histidine--tRNA ligase of Vibrio vulnificus (strain CMCP6).